The primary structure comprises 179 residues: Stathmin-2 (179 aa).

Residues 1-26 form a membrane attachment region; it reads MAKTAMAYKEKMKELSMLSLICSCFY. S16 carries the post-translational modification Phosphoserine. 2 S-palmitoyl cysteine lipidation sites follow: C22 and C24. Positions 38–179 constitute an SLD domain; that stretch reads DDMEVKQINK…NKELQVELSG (142 aa). A regulatory/phosphorylation domain region spans residues 39 to 96; it reads DMEVKQINKRASGQAFELILKPPSPISEAPRTLASPKKKDLSLEEIQKKLEAAEERRK. A phosphoserine mark is found at S50, S62, S73, and S97. Residues 75–179 adopt a coiled-coil conformation; sequence KKKDLSLEEI…NKELQVELSG (105 aa).

It belongs to the stathmin family. In terms of assembly, interacts with MAPK8. Interacts with ITM2C. Interacts with KIFBP. Interacts (via the N-terminal region) with CIB1 (via C-terminal region); the interaction is direct, occurs in a calcium-dependent manner and attenuates the neurite outgrowth inhibition of STMN2. Post-translationally, sumoylated. In terms of processing, phosphorylated mostly by MAPK8, but also by MAPK9 and MAPK10 in the developing brain cortex. N-terminal palmitoylation promotes specific anchoring to the cytosolic leaflet of Golgi membranes and subsequent vesicular trafficking along dendrites and axons. Neuronal Stathmins are substrates for palmitoyltransferases ZDHHC3, ZDHHC7 and ZDHHC15. In terms of tissue distribution, neuron specific.

The protein resides in the cytoplasm. Its subcellular location is the perinuclear region. It is found in the cell projection. It localises to the growth cone. The protein localises to the membrane. The protein resides in the axon. Its subcellular location is the golgi apparatus. It is found in the endosome. It localises to the lamellipodium. Regulator of microtubule stability. When phosphorylated by MAPK8, stabilizes microtubules and consequently controls neurite length in cortical neurons. In the developing brain, negatively regulates the rate of exit from multipolar stage and retards radial migration from the ventricular zone. The protein is Stathmin-2 (STMN2) of Homo sapiens (Human).